Reading from the N-terminus, the 749-residue chain is 1,4-alpha-glucan branching enzyme GlgB (749 aa).

Catalysis depends on aspartate 415, which acts as the Nucleophile. Residue glutamate 468 is the Proton donor of the active site.

The protein belongs to the glycosyl hydrolase 13 family. GlgB subfamily. In terms of assembly, monomer.

The enzyme catalyses Transfers a segment of a (1-&gt;4)-alpha-D-glucan chain to a primary hydroxy group in a similar glucan chain.. The protein operates within glycan biosynthesis; glycogen biosynthesis. Functionally, catalyzes the formation of the alpha-1,6-glucosidic linkages in glycogen by scission of a 1,4-alpha-linked oligosaccharide from growing alpha-1,4-glucan chains and the subsequent attachment of the oligosaccharide to the alpha-1,6 position. This chain is 1,4-alpha-glucan branching enzyme GlgB, found in Nitrosococcus oceani (strain ATCC 19707 / BCRC 17464 / JCM 30415 / NCIMB 11848 / C-107).